The sequence spans 280 residues: Ycf3-interacting protein 1, chloroplastic (280 aa).

The transit peptide at 1–62 (MTTQIFQLPL…NNRRFGSLIV (62 aa)) directs the protein to the chloroplast. The segment at 75-103 (PVPLTLEQQEKEKQNRDDEEDEIDEGDVD) is disordered. Over residues 91–103 (DDEEDEIDEGDVD) the composition is skewed to acidic residues. The chain crosses the membrane as a helical span at residues 255–275 (ALYFVSALPVIIGISVVLILF).

This sequence belongs to the Y3IP1/CEST family. Interacts with Ycf3. In terms of tissue distribution, expressed in cotyledons, rosette and cauline leaves, stems and sepals.

It is found in the plastid. The protein localises to the chloroplast thylakoid membrane. In terms of biological role, nuclear genome-encoded factor that participates in photosystem I (PSI) biogenesis. Cooperates with the plastid genome-encoded protein PSI assembly Ycf3 in the assembly of stable PSI units in the thylakoid membrane. Involved in light-induced chloroplast development and growth. Involved in the plant response to abiotic and photooxidative stresses. May be involved in the suppression of photooxidative damage. The polypeptide is Ycf3-interacting protein 1, chloroplastic (Arabidopsis thaliana (Mouse-ear cress)).